The sequence spans 233 residues: Glucosamine-6-phosphate deaminase (233 aa).

The Proton acceptor; for enolization step role is filled by aspartate 62. Asparagine 128 acts as the For ring-opening step in catalysis. The active-site Proton acceptor; for ring-opening step is the histidine 130. Catalysis depends on glutamate 135, which acts as the For ring-opening step.

The protein belongs to the glucosamine/galactosamine-6-phosphate isomerase family. NagB subfamily.

The catalysed reaction is alpha-D-glucosamine 6-phosphate + H2O = beta-D-fructose 6-phosphate + NH4(+). Its pathway is amino-sugar metabolism; N-acetylneuraminate degradation; D-fructose 6-phosphate from N-acetylneuraminate: step 5/5. Its function is as follows. Catalyzes the reversible isomerization-deamination of glucosamine 6-phosphate (GlcN6P) to form fructose 6-phosphate (Fru6P) and ammonium ion. The chain is Glucosamine-6-phosphate deaminase from Streptococcus agalactiae serotype Ia (strain ATCC 27591 / A909 / CDC SS700).